Here is a 230-residue protein sequence, read N- to C-terminus: MLLHIPTILSRTQATSMQERLAAANWTDGRETVGPQGAQVKHNLQLPETSPLRQELGHEILDALARSPLYFAATLPLRTLPPRFNRYQENHQYGFHVDGAVMSLPVAPDHTPASLRSDISCTLFLNDPDEYEGGELIIADTYGEHEIKLPAGDLIIYPSTSLHRVAPVTRGMRIASFFWVQSLVRQATHRHQLLELDTAIQSLTASNTDHNTILRLTNIYHNLLREWSET.

The Fe2OG dioxygenase domain maps to R78 to S182. 3 residues coordinate Fe cation: H96, D98, and H163. Position 173 (R173) interacts with 2-oxoglutarate.

It depends on Fe(2+) as a cofactor. L-ascorbate is required as a cofactor.

In Xylella fastidiosa (strain M12), this protein is PKHD-type hydroxylase Xfasm12_1709.